The sequence spans 523 residues: Acetyl-coenzyme A carboxylase carboxyl transferase subunit beta, chloroplastic (523 aa).

The 300-residue stretch at Phe224 to Lys523 folds into the CoA carboxyltransferase N-terminal domain. The Zn(2+) site is built by Cys228, Cys231, Cys247, and Cys250. A C4-type zinc finger spans residues Cys228 to Cys250.

This sequence belongs to the AccD/PCCB family. In terms of assembly, acetyl-CoA carboxylase is a heterohexamer composed of biotin carboxyl carrier protein, biotin carboxylase and 2 subunits each of ACCase subunit alpha and ACCase plastid-coded subunit beta (accD). Zn(2+) is required as a cofactor.

The protein localises to the plastid. It is found in the chloroplast stroma. It catalyses the reaction N(6)-carboxybiotinyl-L-lysyl-[protein] + acetyl-CoA = N(6)-biotinyl-L-lysyl-[protein] + malonyl-CoA. It functions in the pathway lipid metabolism; malonyl-CoA biosynthesis; malonyl-CoA from acetyl-CoA: step 1/1. Its function is as follows. Component of the acetyl coenzyme A carboxylase (ACC) complex. Biotin carboxylase (BC) catalyzes the carboxylation of biotin on its carrier protein (BCCP) and then the CO(2) group is transferred by the transcarboxylase to acetyl-CoA to form malonyl-CoA. This chain is Acetyl-coenzyme A carboxylase carboxyl transferase subunit beta, chloroplastic, found in Cucumis sativus (Cucumber).